A 593-amino-acid polypeptide reads, in one-letter code: ABC transporter F family member 2 (593 aa).

Residues 1 to 10 show a composition bias toward basic residues; sequence MAKKGGKNNK. A disordered region spans residues 1-25; sequence MAKKGGKNNKSKKEVTPPTSDVEDE. 2 ABC transporter domains span residues 53-294 and 364-583; these read VKIE…VNQM and MHFD…RDLT. ATP contacts are provided by residues 85-92 and 399-406; these read GQNGCGKS and GPNGAGKS.

This sequence belongs to the ABC transporter superfamily. ABCF family. EF3 subfamily.

The sequence is that of ABC transporter F family member 2 (abcF2) from Dictyostelium discoideum (Social amoeba).